We begin with the raw amino-acid sequence, 204 residues long: Large ribosomal subunit protein eL15 (204 aa).

This sequence belongs to the eukaryotic ribosomal protein eL15 family. In terms of assembly, component of the large ribosomal subunit.

Its subcellular location is the cytoplasm. Functionally, component of the large ribosomal subunit. The ribosome is a large ribonucleoprotein complex responsible for the synthesis of proteins in the cell. This Silurus asotus (Amur catfish) protein is Large ribosomal subunit protein eL15 (rpl15).